A 3163-amino-acid chain; its full sequence is Genome polyprotein (3163 aa).

The 144-residue stretch at 219 to 362 (KMSDQGVDML…KTMSLKIVHF (144 aa)) folds into the Peptidase S30 domain. Catalysis depends on for P1 proteinase activity residues His270, Asp279, and Ser313. The Involved in interaction with stylet and aphid transmission signature appears at 414 to 417 (KITC). Residues 672–674 (PTK) carry the Involved in virions binding and aphid transmission motif. A Peptidase C6 domain is found at 698–820 (MYIAKEGYCY…ESSLKHYRVG (123 aa)). Active-site for helper component proteinase activity residues include Cys706 and His779. The region spanning 1300-1452 (KIAHESDKDI…TQYPVSISTE (153 aa)) is the Helicase ATP-binding domain. An ATP-binding site is contributed by 1313 to 1320 (GAVGSGKS). Positions 1402-1405 (DECH) match the DEAH box motif. One can recognise a Helicase C-terminal domain in the interval 1471-1630 (DVISKGDNIL…GLPVITNNVS (160 aa)). Residues 1871–1888 (STNEMSKFLQLKGKWNKT) are Cytoplasmic-facing. A helical transmembrane segment spans residues 1889–1909 (LITRDVLVICGVLGGGVWMVV). Over 1910–1923 (QHFRSKVSEPVTHE) the chain is Lumenal. The short motif at 1964 to 1971 (KKGKSKGR) is the Nuclear localization signal element. The segment at 1983–2017 (INMYGFDPEDFSAVRFVDPLTGATLDDNPFTDITL) is binding to host eIF(iso)4E. An O-(5'-phospho-RNA)-tyrosine modification is found at Tyr1986. A Peptidase C4 domain is found at 2116–2334 (SNSMFRGLRD…ISWGSLNIQA (219 aa)). Catalysis depends on for nuclear inclusion protein A activity residues His2161, Asp2196, and Cys2266. A RdRp catalytic domain is found at 2600 to 2724 (WVYCDADGSQ…SVHPEYEYIL (125 aa)). The segment at 2883 to 2934 (DLTEEQKQAEKEKKEREKAEKERERQKQLAFKKGKDVAQEEGKRDKEVNAGT) is disordered. Over residues 2886 to 2930 (EEQKQAEKEKKEREKAEKERERQKQLAFKKGKDVAQEEGKRDKEV) the composition is skewed to basic and acidic residues.

The protein belongs to the potyviridae genome polyprotein family. As to quaternary structure, interacts with host eIF4E protein (via cap-binding region); this interaction mediates the translation of the VPg-viral RNA conjugates. Part of a complex that comprises VPg, RNA, host EIF4E and EIF4G; this interaction mediates the translation of the VPg-viral RNA conjugates. In terms of assembly, interacts, via N-terminal region, with host Sec24a protein in COPII-coated vesicles. This binding triggers the formation of host endoplasmic reticulum (ER)-derived viral vesicles involved in cell-to-cell viral movement. Post-translationally, VPg is uridylylated by the polymerase and is covalently attached to the 5'-end of the genomic RNA. This uridylylated form acts as a nucleotide-peptide primer for the polymerase. In terms of processing, potyviral RNA is expressed as two polyproteins which undergo post-translational proteolytic processing. Genome polyprotein is processed by NIa-pro, P1 and HC-pro proteinases resulting in the production of at least ten individual proteins. P3N-PIPO polyprotein is cleaved by P1 and HC-pro proteinases resulting in the production of three individual proteins. The P1 proteinase and the HC-pro cleave only their respective C-termini autocatalytically. 6K1 is essential for proper proteolytic separation of P3 from CI.

The protein localises to the host cytoplasm. The protein resides in the host nucleus. Its subcellular location is the host cytoplasmic vesicle. It is found in the host membrane. It localises to the virion. It carries out the reaction RNA(n) + a ribonucleoside 5'-triphosphate = RNA(n+1) + diphosphate. The catalysed reaction is Hydrolyzes glutaminyl bonds, and activity is further restricted by preferences for the amino acids in P6 - P1' that vary with the species of potyvirus, e.g. Glu-Xaa-Xaa-Tyr-Xaa-Gln-|-(Ser or Gly) for the enzyme from tobacco etch virus. The natural substrate is the viral polyprotein, but other proteins and oligopeptides containing the appropriate consensus sequence are also cleaved.. It catalyses the reaction Hydrolyzes a Gly-|-Gly bond at its own C-terminus, commonly in the sequence -Tyr-Xaa-Val-Gly-|-Gly, in the processing of the potyviral polyprotein.. Functionally, cysteine protease that cleaves a Gly-Gly dipeptide at its own C-terminus. Required for aphid transmission and also has proteolytic activity. Interacts with virions and aphid stylets. Acts as a suppressor of RNA-mediated gene silencing, also known as post-transcriptional gene silencing (PTGS), a mechanism of plant viral defense that limits the accumulation of viral RNAs. May have RNA-binding activity. In terms of biological role, has helicase activity. It may be involved in replication. Indispensable for virus replication. Its function is as follows. Responsible for the formation of peripheral motile host endoplasmic reticulum (ER)-derived viral vesicles called 'viral factories', seat of the viral RNA (vRNA) replication and carrying vRNA to plasmodesmata for delivery into adjacent non-infected cells; this process relies on host Sec24a-binding. Functionally, mediates the cap-independent, EIF4E-dependent translation of viral genomic RNAs. Binds to the cap-binding site of host EIF4E and thus interferes with the host EIF4E-dependent mRNA export and translation. VPg-RNA directly binds EIF4E and is a template for transcription. Also forms trimeric complexes with EIF4E-EIF4G, which are templates for translation. In terms of biological role, has RNA-binding and proteolytic activities. RNA-dependent RNA polymerase that ensures transcription and replication of viral RNA (vRNA). Its function is as follows. Involved in aphid transmission, cell-to-cell and systemis movement, encapsidation of the viral RNA and in the regulation of viral RNA amplification. The protein is Genome polyprotein of Brassica (TuMV).